Reading from the N-terminus, the 498-residue chain is Histone-lysine N-methyltransferase SET5 (498 aa).

Residues 68–94 (KPNDGCTSRSTSCPGGKKKKKSKTDTS) form a disordered region. The SET domain occupies 108–415 (AGIRGVYFDP…PDDELVISYI (308 aa)).

This sequence belongs to the class V-like SAM-binding methyltransferase superfamily. Histone-lysine methyltransferase family. SET5 subfamily.

It is found in the nucleus. The protein localises to the chromosome. Its subcellular location is the cytoplasm. The enzyme catalyses L-lysyl-[histone] + S-adenosyl-L-methionine = N(6)-methyl-L-lysyl-[histone] + S-adenosyl-L-homocysteine + H(+). In terms of biological role, histone methyltransferase that monomethylates 'Lys-5', 'Lys-8' and 'Lys-12' of histone H4 (H4K5me1, H4K8me1 and H4K12me1, respectively), thereby controlling gene expression and remodeling chromatin structures. The protein is Histone-lysine N-methyltransferase SET5 (SET5) of Mycosarcoma maydis (Corn smut fungus).